The primary structure comprises 161 residues: Lipoprotein signal peptidase (161 aa).

Helical transmembrane passes span 8-28 (LKYF…KYLA), 40-60 (ITSF…SLLS), 67-87 (QMIM…YLII), and 91-111 (ITEK…LGNF). Active-site residues include D122 and D140. The helical transmembrane segment at 136-156 (FNIADSAITCGVVILIAASLF) threads the bilayer.

Belongs to the peptidase A8 family.

It localises to the cell inner membrane. The enzyme catalyses Release of signal peptides from bacterial membrane prolipoproteins. Hydrolyzes -Xaa-Yaa-Zaa-|-(S,diacylglyceryl)Cys-, in which Xaa is hydrophobic (preferably Leu), and Yaa (Ala or Ser) and Zaa (Gly or Ala) have small, neutral side chains.. The protein operates within protein modification; lipoprotein biosynthesis (signal peptide cleavage). Functionally, this protein specifically catalyzes the removal of signal peptides from prolipoproteins. The chain is Lipoprotein signal peptidase from Francisella tularensis subsp. tularensis (strain FSC 198).